The sequence spans 446 residues: NADH-ubiquinone oxidoreductase chain 4 (446 aa).

A run of 14 helical transmembrane segments spans residues 4–24 (LILM…FWMV), 28–48 (LFVI…FVNI), 56–76 (VLSY…IVAS), 88–105 (LFLF…LTFS), 109–131 (LFMF…LGWG), 141–161 (VYLL…IFYL), 182–202 (LLYL…LVHL), 218–238 (ILAG…FSFL), 245–265 (YNYI…LVCL), 272–292 (ALIA…LMTL), 297–317 (LSGS…LFCL), 330–350 (LLIN…WFLL), 373–393 (IVSW…FSAA), and 426–446 (FLHW…LFWI).

The protein belongs to the complex I subunit 4 family.

It is found in the mitochondrion membrane. It catalyses the reaction a ubiquinone + NADH + 5 H(+)(in) = a ubiquinol + NAD(+) + 4 H(+)(out). Core subunit of the mitochondrial membrane respiratory chain NADH dehydrogenase (Complex I) that is believed to belong to the minimal assembly required for catalysis. Complex I functions in the transfer of electrons from NADH to the respiratory chain. The immediate electron acceptor for the enzyme is believed to be ubiquinone. In Ceratitis capitata (Mediterranean fruit fly), this protein is NADH-ubiquinone oxidoreductase chain 4 (ND4).